We begin with the raw amino-acid sequence, 248 residues long: HTH-type transcriptional regulator GgaR (248 aa).

The HTH gntR-type domain occupies 22–90 (TPLYIKFAET…RGYGTQINNI (69 aa)). The segment at residues 50 to 69 (ERDLSQLTGVSRITVRKAMQ) is a DNA-binding region (H-T-H motif).

Its activity is regulated as follows. Senses ADP-glucose (ADPG), which is the substrate for glycogen elongation, as an effector. In the presence of ADPG, GgaR becomes inactive and derepresses the yegTUV operon, leading to glycogen accumulation. In contrast, in the absence of glucose, the concentration of ADPG decreases, GgaR becomes active, and glycogen accumulation is repressed. Its function is as follows. Transcriptional regulator that regulates glycogen accumulation in response to the amount of glucose available to the cell. Acts as a repressor of the yegTUV operon, which may be involved in glycogen accumulation. The protein is HTH-type transcriptional regulator GgaR of Escherichia coli O6:H1 (strain CFT073 / ATCC 700928 / UPEC).